We begin with the raw amino-acid sequence, 242 residues long: tRNA (guanine-N(1)-)-methyltransferase (242 aa).

Residues glycine 114 and isoleucine 134 to leucine 139 contribute to the S-adenosyl-L-methionine site. The span at arginine 223–asparagine 233 shows a compositional bias: basic and acidic residues. Positions arginine 223–serine 242 are disordered.

It belongs to the RNA methyltransferase TrmD family. In terms of assembly, homodimer.

Its subcellular location is the cytoplasm. The catalysed reaction is guanosine(37) in tRNA + S-adenosyl-L-methionine = N(1)-methylguanosine(37) in tRNA + S-adenosyl-L-homocysteine + H(+). Its function is as follows. Specifically methylates guanosine-37 in various tRNAs. The polypeptide is tRNA (guanine-N(1)-)-methyltransferase (Rhodopirellula baltica (strain DSM 10527 / NCIMB 13988 / SH1)).